A 252-amino-acid chain; its full sequence is Thiazole synthase (252 aa).

Catalysis depends on lysine 95, which acts as the Schiff-base intermediate with DXP. Residues glycine 156, alanine 182–glycine 183, and asparagine 204–threonine 205 each bind 1-deoxy-D-xylulose 5-phosphate.

It belongs to the ThiG family. Homotetramer. Forms heterodimers with either ThiH or ThiS.

Its subcellular location is the cytoplasm. The enzyme catalyses [ThiS sulfur-carrier protein]-C-terminal-Gly-aminoethanethioate + 2-iminoacetate + 1-deoxy-D-xylulose 5-phosphate = [ThiS sulfur-carrier protein]-C-terminal Gly-Gly + 2-[(2R,5Z)-2-carboxy-4-methylthiazol-5(2H)-ylidene]ethyl phosphate + 2 H2O + H(+). Its pathway is cofactor biosynthesis; thiamine diphosphate biosynthesis. Functionally, catalyzes the rearrangement of 1-deoxy-D-xylulose 5-phosphate (DXP) to produce the thiazole phosphate moiety of thiamine. Sulfur is provided by the thiocarboxylate moiety of the carrier protein ThiS. In vitro, sulfur can be provided by H(2)S. This chain is Thiazole synthase, found in Shewanella sp. (strain ANA-3).